A 751-amino-acid chain; its full sequence is Cyanobacterial phytochrome B (751 aa).

Cys-17 is an a tetrapyrrole binding site. A chromophore binding domain region spans residues 22–511; sequence IHIPGLIQPH…RSAIIGIVLQ (490 aa). Residues 152 to 320 form the GAF domain; that stretch reads TTTEISQILA…MTSVEMSAKE (169 aa). Residues 536–751 form the Histidine kinase domain; it reads IASHDLKEPL…STFYFTLQDV (216 aa). Phosphohistidine; by autocatalysis is present on His-539.

The protein in the N-terminal section; belongs to the phytochrome family. In terms of processing, contains one covalently linked tetrapyrrole chromophore.

The catalysed reaction is ATP + protein L-histidine = ADP + protein N-phospho-L-histidine.. Photoreceptor which exists in two forms that are reversibly interconvertible by light: the R form that absorbs maximally in the red region of the spectrum and the FR form that absorbs maximally in the far-red region. This chain is Cyanobacterial phytochrome B (bphB), found in Nostoc sp. (strain PCC 7120 / SAG 25.82 / UTEX 2576).